Reading from the N-terminus, the 262-residue chain is 5'-nucleotidase SurE (262 aa).

Residues D8, D9, S41, and N97 each contribute to the a divalent metal cation site.

This sequence belongs to the SurE nucleotidase family. The cofactor is a divalent metal cation.

It localises to the cytoplasm. The enzyme catalyses a ribonucleoside 5'-phosphate + H2O = a ribonucleoside + phosphate. Its function is as follows. Nucleotidase that shows phosphatase activity on nucleoside 5'-monophosphates. The protein is 5'-nucleotidase SurE of Methanococcus maripaludis (strain DSM 14266 / JCM 13030 / NBRC 101832 / S2 / LL).